We begin with the raw amino-acid sequence, 834 residues long: DNA-directed RNA polymerase subunit beta' (834 aa).

Cysteine 88, cysteine 90, cysteine 104, and cysteine 107 together coordinate Zn(2+). Residues aspartate 641, aspartate 643, and aspartate 645 each contribute to the Mg(2+) site.

The protein belongs to the RNA polymerase beta' chain family. RpoC1 subfamily. As to quaternary structure, in plastids the minimal PEP RNA polymerase catalytic core is composed of four subunits: alpha, beta, beta', and beta''. When a (nuclear-encoded) sigma factor is associated with the core the holoenzyme is formed, which can initiate transcription. It depends on Mg(2+) as a cofactor. Requires Zn(2+) as cofactor.

The protein resides in the plastid. It carries out the reaction RNA(n) + a ribonucleoside 5'-triphosphate = RNA(n+1) + diphosphate. Functionally, DNA-dependent RNA polymerase catalyzes the transcription of DNA into RNA using the four ribonucleoside triphosphates as substrates. The protein is DNA-directed RNA polymerase subunit beta' (rpoC1) of Helicosporidium sp. subsp. Simulium jonesii (Green alga).